Here is a 1300-residue protein sequence, read N- to C-terminus: Insulin receptor-related protein (1300 aa).

An N-terminal signal peptide occupies residues 1–26 (MARPKLWPWGILLLVSLLSAGFNLDT). A glycan (N-linked (GlcNAc...) asparagine) is linked at asparagine 47. 9 disulfide bridges follow: cysteine 214–cysteine 222, cysteine 216–cysteine 228, cysteine 229–cysteine 237, cysteine 233–cysteine 246, cysteine 249–cysteine 258, cysteine 262–cysteine 274, cysteine 280–cysteine 300, cysteine 304–cysteine 317, and cysteine 320–cysteine 324. Asparagine 311 is a glycosylation site (N-linked (GlcNAc...) asparagine). 8 N-linked (GlcNAc...) asparagine glycosylation sites follow: asparagine 411, asparagine 492, asparagine 528, asparagine 616, asparagine 634, asparagine 756, asparagine 885, and asparagine 898. Fibronectin type-III domains are found at residues 483–603 (QTRT…TLPA) and 607–707 (VPQD…AQEA). A disulfide bridge connects residues cysteine 657 and cysteine 864. The tract at residues 740–762 (DAGRHRRAIGSPRPGGNSSDFEI) is disordered. Residues 747–921 (AIGSPRPGGN…PEEEDSGGLH (175 aa)) are Extracellular-facing. Residues 818–912 (IPGKLSWEAA…DSVAFYIPGP (95 aa)) form the Fibronectin type-III 3 domain. A helical membrane pass occupies residues 922-943 (ILLTVTPAGLMLLIILAALGFF). Residues 944 to 1300 (YSRKRNGTLY…CSLQNGGPEH (357 aa)) are Cytoplasmic-facing. The region spanning 979-1254 (ISIIRELGQG…SIQKELRPSF (276 aa)) is the Protein kinase domain. ATP contacts are provided by residues 985–993 (LGQGSFGMV) and lysine 1013. Aspartate 1115 acts as the Proton acceptor in catalysis. Phosphotyrosine; by autocatalysis is present on residues tyrosine 1145 and tyrosine 1146. The segment at 1270 to 1300 (GLQPTTDAESSSPPTSKGASDCSLQNGGPEH) is disordered. The span at 1272–1300 (QPTTDAESSSPPTSKGASDCSLQNGGPEH) shows a compositional bias: polar residues.

The protein belongs to the protein kinase superfamily. Tyr protein kinase family. Insulin receptor subfamily. In terms of assembly, probable tetramer of 2 alpha and 2 beta chains linked by disulfide bonds. The alpha chains contribute to the formation of the ligand-binding domain, while the beta chains carry the kinase domain. In terms of processing, autophosphorylated on tyrosine residues between pH 7.9 and pH 10.5.

The protein resides in the membrane. It catalyses the reaction L-tyrosyl-[protein] + ATP = O-phospho-L-tyrosyl-[protein] + ADP + H(+). Receptor with tyrosine-protein kinase activity. Functions as a pH sensing receptor which is activated by increased extracellular pH. Activates an intracellular signaling pathway that involves IRS1 and AKT1/PKB. This chain is Insulin receptor-related protein (INSRR), found in Cavia porcellus (Guinea pig).